The primary structure comprises 320 residues: N-acetylneuraminate lyase (320 aa).

Threonine 51 and threonine 52 together coordinate aceneuramate. Tyrosine 143 acts as the Proton donor in catalysis. Residue lysine 173 is the Schiff-base intermediate with substrate of the active site. Positions 175, 199, 201, 202, and 218 each coordinate aceneuramate.

Belongs to the DapA family. NanA subfamily. In terms of assembly, homotetramer.

The protein localises to the cytoplasm. It catalyses the reaction aceneuramate = aldehydo-N-acetyl-D-mannosamine + pyruvate. Its pathway is amino-sugar metabolism; N-acetylneuraminate degradation. Functionally, catalyzes the cleavage of N-acetylneuraminic acid (sialic acid) to form pyruvate and N-acetylmannosamine via a Schiff base intermediate. It prevents sialic acids from being recycled and returning to the cell surface. Involved in the N-glycolylneuraminic acid (Neu5Gc) degradation pathway. The chain is N-acetylneuraminate lyase from Pongo abelii (Sumatran orangutan).